Here is a 270-residue protein sequence, read N- to C-terminus: LTEVVKAQSFTKAAENLYTSQPSISRDIKRLENDYDVKVFEFKHSKMTLTSDGEKLYQYVLQRNYLEQALRQDLKMQNNAVAGDLKLGSSFTFGEYRLSRQLTKLAQMYPELHIHVHLDNSETIVEQIKNNIVDVGIVEKKIQNNAIISTPIAQDEIVLIKKKSSSSNLETCFIREQGSGTRVYQENGLNQLSLNPYLVVINNTSLIKSMVHAGNGFSIVSKSTLTSEDLEQLEVINLDIERFFYLILHKDKYIDEKMKRVISVLKQNVE.

The HTH lysR-type domain occupies 1-50; it reads LTEVVKAQSFTKAAENLYTSQPSISRDIKRLENDYDVKVFEFKHSKMTLT. A DNA-binding region (H-T-H motif) is located at residues 10 to 29; the sequence is FTKAAENLYTSQPSISRDIK.

This sequence belongs to the LysR transcriptional regulatory family.

This is an uncharacterized protein from Staphylococcus xylosus.